The following is a 64-amino-acid chain: UPF0434 protein Bcen_1934 (64 aa).

This sequence belongs to the UPF0434 family.

This is UPF0434 protein Bcen_1934 from Burkholderia orbicola (strain AU 1054).